The following is a 487-amino-acid chain: Neuronal immunoglobulin domain-containing protein rig-3 (487 aa).

Residues 1–23 (MGRLLAKMLFPLAMCLFVSAVSA) form the signal peptide. Ig-like domains are found at residues 34–139 (PIVI…KTIK) and 247–354 (PEFE…PKVT). Cystine bridges form between cysteine 61-cysteine 124 and cysteine 271-cysteine 327. The GPI-anchor amidated aspartate moiety is linked to residue aspartate 466. Residues 467-487 (SASDSKFPLALATLFFVCLFI) constitute a propeptide, removed in mature form.

Expressed in the cholinergic motor neurons AS, VA and DA in the ventral nerve cord and in the mechanosensory ALM neurons in the midbody.

Its subcellular location is the cell projection. The protein localises to the axon. The protein resides in the synapse. It localises to the cell membrane. Its function is as follows. Cell surface protein which plays a role in the plasticity of cholinergic synapses at neuromuscular junctions and in the polarity of the mechanosensory neuron ALM, possibly by antagonizing Wnt signaling. The protein is Neuronal immunoglobulin domain-containing protein rig-3 of Caenorhabditis elegans.